The chain runs to 473 residues: Aspartyl/glutamyl-tRNA(Asn/Gln) amidotransferase subunit B (473 aa).

Belongs to the GatB/GatE family. GatB subfamily. Heterotrimer of A, B and C subunits.

The enzyme catalyses L-glutamyl-tRNA(Gln) + L-glutamine + ATP + H2O = L-glutaminyl-tRNA(Gln) + L-glutamate + ADP + phosphate + H(+). It catalyses the reaction L-aspartyl-tRNA(Asn) + L-glutamine + ATP + H2O = L-asparaginyl-tRNA(Asn) + L-glutamate + ADP + phosphate + 2 H(+). Its function is as follows. Allows the formation of correctly charged Asn-tRNA(Asn) or Gln-tRNA(Gln) through the transamidation of misacylated Asp-tRNA(Asn) or Glu-tRNA(Gln) in organisms which lack either or both of asparaginyl-tRNA or glutaminyl-tRNA synthetases. The reaction takes place in the presence of glutamine and ATP through an activated phospho-Asp-tRNA(Asn) or phospho-Glu-tRNA(Gln). This chain is Aspartyl/glutamyl-tRNA(Asn/Gln) amidotransferase subunit B, found in Wolbachia pipientis subsp. Culex pipiens (strain wPip).